Reading from the N-terminus, the 184-residue chain is Ras-related protein Rap-1b (184 aa).

GTP is bound at residue 10–18 (GSGGVGKSA). The tract at residues 25 to 67 (QGIFVEKYDPTIEDSYRKQVEVDAQQCMLEILDTAGTEQFTAM) is interaction with KRIT1. The short motif at 32–40 (YDPTIEDSY) is the Effector region element. Ser-39 carries the post-translational modification ADP-ribosylserine; by botulinum toxin. GTP is bound by residues 57–61 (DTAGT), 116–119 (NKCD), and 147–149 (SAK). Ser-179 is modified (phosphoserine; by PKA). A Cysteine methyl ester modification is found at Cys-181. A lipid anchor (S-geranylgeranyl cysteine) is attached at Cys-181. A propeptide spans 182–184 (QLL) (removed in mature form).

Belongs to the small GTPase superfamily. Ras family. Heterodimer with RAP1GAP. Interacts with EPAC2. Interacts with SGSM1. Interacts with SGSM2. Interacts with SGSM3. Interacts with KRIT1. Interacts with RAP1GDS1.

It localises to the cell membrane. The protein resides in the cytoplasm. It is found in the cytosol. The protein localises to the cell junction. The enzyme catalyses GTP + H2O = GDP + phosphate + H(+). Activated by guanine nucleotide-exchange factor (GEF) EPAC2 in a cAMP-dependent manner. Functionally, GTP-binding protein that possesses intrinsic GTPase activity. Contributes to the polarizing activity of KRIT1 and CDH5 in the establishment and maintenance of correct endothelial cell polarity and vascular lumen. Required for the localization of phosphorylated PRKCZ, PARD3 and TIAM1 to the cell junction. Plays a role in the establishment of basal endothelial barrier function. In Rattus norvegicus (Rat), this protein is Ras-related protein Rap-1b (Rap1b).